A 512-amino-acid polypeptide reads, in one-letter code: MKKGGIVILDFGSQYNQLIARRVREMGVYAEVVPFHEDVDKILAREPKGIILSGGPASVYAEGAPSLDIKLFQNNIPILGLCYGMQLITHLHGGKVARADKQEFGKAELELDDKNHILYKNIPNKTTVWMSHGDHVTEMAPDFKIIAHTDSSIAAIENSDKNIYAFQYHPEVTHSQHGFDMLKNFIFGIAKAEKNWSMENYIESTVKQIKERVGNKQVILGLSGGVDSSVAAALINKAIGRQLTCIFVDTGLLRKDEAKQVMEVYAKNFDMNIKCINAEERFLTKLAGVTDPETKRKIIGKEFVEVFNEEAKKIEGAEFLAQGTIYPDVIESVSVKGPSVTIKSHHNVGGLPEDLKFELLEPLRELFKDEVRKVGRELGIPDYMVDRHPFPGPGLGIRILGEVTKEKADILREADAIFIEELRKADLYNKVSQAFVVLLPVKSVGVMGDERTYEYTAVLRSANTIDFMTATWSHLPYEFLEKVSNRILNEVKGINRLTYDISSKPPATIEWE.

Residues 5-195 form the Glutamine amidotransferase type-1 domain; it reads GIVILDFGSQ…IFGIAKAEKN (191 aa). The active-site Nucleophile is C82. Catalysis depends on residues H169 and E171. In terms of domain architecture, GMPS ATP-PPase spans 196 to 387; sequence WSMENYIEST…LGIPDYMVDR (192 aa). 223–229 provides a ligand contact to ATP; it reads SGGVDSS.

Homodimer.

It carries out the reaction XMP + L-glutamine + ATP + H2O = GMP + L-glutamate + AMP + diphosphate + 2 H(+). Its pathway is purine metabolism; GMP biosynthesis; GMP from XMP (L-Gln route): step 1/1. Functionally, catalyzes the synthesis of GMP from XMP. This Fusobacterium nucleatum subsp. nucleatum (strain ATCC 25586 / DSM 15643 / BCRC 10681 / CIP 101130 / JCM 8532 / KCTC 2640 / LMG 13131 / VPI 4355) protein is GMP synthase [glutamine-hydrolyzing].